The primary structure comprises 284 residues: Bifunctional protein FolD (284 aa).

NADP(+) contacts are provided by residues 166–168 (GSS) and I232.

The protein belongs to the tetrahydrofolate dehydrogenase/cyclohydrolase family. As to quaternary structure, homodimer.

It catalyses the reaction (6R)-5,10-methylene-5,6,7,8-tetrahydrofolate + NADP(+) = (6R)-5,10-methenyltetrahydrofolate + NADPH. The enzyme catalyses (6R)-5,10-methenyltetrahydrofolate + H2O = (6R)-10-formyltetrahydrofolate + H(+). The protein operates within one-carbon metabolism; tetrahydrofolate interconversion. Catalyzes the oxidation of 5,10-methylenetetrahydrofolate to 5,10-methenyltetrahydrofolate and then the hydrolysis of 5,10-methenyltetrahydrofolate to 10-formyltetrahydrofolate. This Buchnera aphidicola subsp. Cinara cedri (strain Cc) protein is Bifunctional protein FolD.